Reading from the N-terminus, the 65-residue chain is Toxin NaTx-22 (65 aa).

Positions 1–64 constitute an LCN-type CS-alpha/beta domain; that stretch reads KDGYPVIKTT…TYPIPGKTCK (64 aa). 4 disulfide bridges follow: C12/C63, C16/C39, C25/C44, and C29/C46.

It belongs to the long (4 C-C) scorpion toxin superfamily. Sodium channel inhibitor family. In terms of tissue distribution, expressed by the venom gland.

Its subcellular location is the secreted. Functionally, probable sodium channel inhibitor. In Centruroides sculpturatus (Arizona bark scorpion), this protein is Toxin NaTx-22.